A 1044-amino-acid polypeptide reads, in one-letter code: Unconventional myosin-Ic (1044 aa).

A Myosin motor domain is found at 28 to 712 (GVQDFVLLEN…TLFATEDSLE (685 aa)). ATP-binding positions include Asn-69, Tyr-77, 120–129 (SGESGAGKTE), and 173–177 (NDNSS). Position 364 is an N6-methyllysine (Lys-364). Phosphoserine is present on Ser-389. Lys-467 carries the N6-acetyllysine modification. A Phosphoserine modification is found at Ser-517. The tract at residues 589-611 (LLQLVEILRSKEPAYIRCIKPND) is actin-binding. IQ domains lie at 715-744 (RQSL…SAIC) and 738-767 (VKRS…AAQT). 2 positions are modified to phosphoserine: Ser-845 and Ser-1022. Residues 866–1040 (KDNYPQSVPR…NGHLAVVAPR (175 aa)) enclose the TH1 domain.

This sequence belongs to the TRAFAC class myosin-kinesin ATPase superfamily. Myosin family. As to quaternary structure, interacts (via its IQ motifs) with CABP1 and CIB1; the interaction with CABP1 and CIB1 is calcium-dependent. Interacts (via tail domain) with PLEKHB1 (via PH domain); the interaction is not affected by the presence or absence of calcium and CALM. Interacts with POLR1A. Interacts with POLR2A. Component of the B-WICH complex, at least composed of SMARCA5/SNF2H, BAZ1B/WSTF, SF3B1, DEK, MYO1C, ERCC6, MYBBP1A and DDX21. Interacts (via its IQ motifs) with CALM; this precludes interaction with YWHAB. Interacts with YWHAB; this precludes interaction with CALM. Interacts with RPS6. Interacts with actin. Interacts with LLPH. Interacts with GLUT4. Interacts (via its IQ motifs) with SH3BGRL3; the interaction is dependent on calcium and takes place at membrane ruffles.

The protein resides in the cytoplasm. It localises to the nucleus. The protein localises to the cell cortex. It is found in the cell projection. Its subcellular location is the stereocilium membrane. The protein resides in the cytoplasmic vesicle. It localises to the ruffle membrane. Functionally, myosins are actin-based motor molecules with ATPase activity. Unconventional myosins serve in intracellular movements. Their highly divergent tails are presumed to bind to membranous compartments, which would be moved relative to actin filaments. Involved in glucose transporter recycling in response to insulin by regulating movement of intracellular GLUT4-containing vesicles to the plasma membrane. Component of the hair cell's (the sensory cells of the inner ear) adaptation-motor complex. Acts as a mediator of adaptation of mechanoelectrical transduction in stereocilia of vestibular hair cells. Binds phosphoinositides and links the actin cytoskeleton to cellular membranes. This chain is Unconventional myosin-Ic (Myo1c), found in Rattus norvegicus (Rat).